The chain runs to 663 residues: ATP-dependent zinc metalloprotease FtsH (663 aa).

Over 1–12 (MNKKETNTSWWR) the chain is Stromal. Residues 13–33 (IILISLGISIICILAAFLAMK) traverse the membrane as a helical segment. At 34-135 (DGFFVLENNT…HPPKLDIFKT (102 aa)) the chain is on the lumenal side. Residues 136 to 156 (ISDTLGSLIVPGLVVAVFYLF) traverse the membrane as a helical segment. Topologically, residues 157–663 (LERANNNNNN…KIYESKFPKK (507 aa)) are stromal. The segment at 165–184 (NNNSNGSPFGPGGGPNQNMR) is disordered. Residue 244–251 (GPPGTGKT) participates in ATP binding. A Zn(2+)-binding site is contributed by His465. Glu466 is an active-site residue. Residues His469 and Asp543 each contribute to the Zn(2+) site.

This sequence in the central section; belongs to the AAA ATPase family. In the C-terminal section; belongs to the peptidase M41 family. Homohexamer. It depends on Zn(2+) as a cofactor.

It is found in the plastid. The protein localises to the chloroplast thylakoid membrane. Its function is as follows. Acts as a processive, ATP-dependent zinc metallopeptidase. This Heterosigma akashiwo (strain NIES-293 / 8280G21-1) protein is ATP-dependent zinc metalloprotease FtsH.